A 520-amino-acid chain; its full sequence is GMP synthase [glutamine-hydrolyzing] (520 aa).

The region spanning Ala3–Asp200 is the Glutamine amidotransferase type-1 domain. Cys84 acts as the Nucleophile in catalysis. Catalysis depends on residues His175 and Glu177. One can recognise a GMPS ATP-PPase domain in the interval Trp201–Gln386. Ser228–Ser234 lines the ATP pocket.

Homodimer.

It carries out the reaction XMP + L-glutamine + ATP + H2O = GMP + L-glutamate + AMP + diphosphate + 2 H(+). It participates in purine metabolism; GMP biosynthesis; GMP from XMP (L-Gln route): step 1/1. Functionally, catalyzes the synthesis of GMP from XMP. In Wolbachia pipientis wMel, this protein is GMP synthase [glutamine-hydrolyzing].